Consider the following 304-residue polypeptide: Uricase (304 aa).

At alanine 2 the chain carries N-acetylalanine. 2 positions are modified to N6-acetyllysine; alternate: lysine 10 and lysine 23. N6-succinyllysine; alternate occurs at positions 10 and 23. The active-site Charge relay system is the lysine 23. N6-acetyllysine occurs at positions 27 and 36. Phosphoserine is present on residues serine 39 and serine 63. Residue threonine 68 is the Charge relay system of the active site. Urate is bound by residues threonine 68 and aspartate 69. N6-acetyllysine is present on residues lysine 118, lysine 122, and lysine 164. Phenylalanine 170 is a binding site for urate. An N6-acetyllysine mark is found at lysine 175 and lysine 185. Residue arginine 187 participates in urate binding. N6-acetyllysine; alternate occurs at positions 221 and 228. Lysine 221 and lysine 228 each carry N6-succinyllysine; alternate. Serine 232 carries the phosphoserine modification. Urate is bound by residues valine 235, glutamine 236, and asparagine 262. Histidine 264 serves as the catalytic Charge relay system. Position 278 is an N6-acetyllysine (lysine 278). Position 289 is a phosphotyrosine (tyrosine 289). Residues 302–304 carry the Microbody targeting signal motif; the sequence is SRL.

The protein belongs to the uricase family.

It is found in the peroxisome. The catalysed reaction is urate + O2 + H2O = 5-hydroxyisourate + H2O2. Its pathway is purine metabolism; urate degradation; (S)-allantoin from urate: step 1/3. Functionally, catalyzes the oxidation of uric acid to 5-hydroxyisourate, which is further processed to form (S)-allantoin. This chain is Uricase (UOX), found in Macaca fascicularis (Crab-eating macaque).